We begin with the raw amino-acid sequence, 61 residues long: Small ribosomal subunit protein uS14B (61 aa).

Positions 24, 27, 40, and 43 each coordinate Zn(2+).

The protein belongs to the universal ribosomal protein uS14 family. Zinc-binding uS14 subfamily. As to quaternary structure, part of the 30S ribosomal subunit. Contacts proteins S3 and S10. Requires Zn(2+) as cofactor.

Binds 16S rRNA, required for the assembly of 30S particles and may also be responsible for determining the conformation of the 16S rRNA at the A site. The protein is Small ribosomal subunit protein uS14B of Streptococcus agalactiae serotype Ia (strain ATCC 27591 / A909 / CDC SS700).